We begin with the raw amino-acid sequence, 114 residues long: Non-specific lipid-transfer protein 1 (114 aa).

The first 23 residues, 1-23 (MEMVSKIACFVLLCMVVVAPHAE), serve as a signal peptide directing secretion. Cystine bridges form between Cys27–Cys73, Cys37–Cys50, Cys51–Cys96, and Cys71–Cys110.

The protein belongs to the plant LTP family.

Functionally, plant non-specific lipid-transfer proteins transfer phospholipids as well as galactolipids across membranes. May play a role in wax or cutin deposition in the cell walls of expanding epidermal cells and certain secretory tissues. This Solanum pennellii (Tomato) protein is Non-specific lipid-transfer protein 1 (LTP1).